The primary structure comprises 295 residues: Acetylglutamate kinase (295 aa).

Residues 64–65 (GG), arginine 86, and asparagine 190 contribute to the substrate site.

The protein belongs to the acetylglutamate kinase family. ArgB subfamily.

It is found in the cytoplasm. It catalyses the reaction N-acetyl-L-glutamate + ATP = N-acetyl-L-glutamyl 5-phosphate + ADP. It functions in the pathway amino-acid biosynthesis; L-arginine biosynthesis; N(2)-acetyl-L-ornithine from L-glutamate: step 2/4. Its function is as follows. Catalyzes the ATP-dependent phosphorylation of N-acetyl-L-glutamate. This Oleidesulfovibrio alaskensis (strain ATCC BAA-1058 / DSM 17464 / G20) (Desulfovibrio alaskensis) protein is Acetylglutamate kinase.